Here is a 186-residue protein sequence, read N- to C-terminus: Probable GTP-binding protein EngB (186 aa).

Residues Asp-18–Lys-186 form the EngB-type G domain. GTP contacts are provided by residues Gly-26 to Ser-33, Gly-52 to Leu-56, Asp-70 to Gly-73, Thr-137 to Asp-140, and Val-166 to Ser-168. Positions 33 and 54 each coordinate Mg(2+).

It belongs to the TRAFAC class TrmE-Era-EngA-EngB-Septin-like GTPase superfamily. EngB GTPase family. Requires Mg(2+) as cofactor.

Functionally, necessary for normal cell division and for the maintenance of normal septation. In Mycoplasmopsis pulmonis (strain UAB CTIP) (Mycoplasma pulmonis), this protein is Probable GTP-binding protein EngB.